We begin with the raw amino-acid sequence, 210 residues long: MKKGLIAKKLGMTQIFADDGRRIPVTVVEAGPCIVLQKKTVETDGYNAIQVGFLAKDADKSGRALVGHCKSAGQGVFTYIREFRVEDVDRYTIGDSITAEIFAPGDYVDVTGTSIGKGFQGVIKRWGFRGGRSSHGSCFHRAPGSIGSSAWPSRVFKNKKMPGQLGNERVTVQRLQVVRVDTADNLLLIRGAIPGAKNGILLLKDSVKAR.

This sequence belongs to the universal ribosomal protein uL3 family. As to quaternary structure, part of the 50S ribosomal subunit. Forms a cluster with proteins L14 and L19.

Its function is as follows. One of the primary rRNA binding proteins, it binds directly near the 3'-end of the 23S rRNA, where it nucleates assembly of the 50S subunit. The chain is Large ribosomal subunit protein uL3 from Geobacter metallireducens (strain ATCC 53774 / DSM 7210 / GS-15).